The primary structure comprises 305 residues: Glycerol-3-phosphate dehydrogenase [NAD(P)+] (305 aa).

W11, R31, and K79 together coordinate NADPH. K79 and G107 together coordinate sn-glycerol 3-phosphate. A111 lines the NADPH pocket. K162, D215, S225, R226, and N227 together coordinate sn-glycerol 3-phosphate. K162 serves as the catalytic Proton acceptor. R226 is an NADPH binding site. E252 contacts NADPH.

It belongs to the NAD-dependent glycerol-3-phosphate dehydrogenase family.

It is found in the cytoplasm. The catalysed reaction is sn-glycerol 3-phosphate + NAD(+) = dihydroxyacetone phosphate + NADH + H(+). It carries out the reaction sn-glycerol 3-phosphate + NADP(+) = dihydroxyacetone phosphate + NADPH + H(+). It participates in membrane lipid metabolism; glycerophospholipid metabolism. Functionally, catalyzes the reduction of the glycolytic intermediate dihydroxyacetone phosphate (DHAP) to sn-glycerol 3-phosphate (G3P), the key precursor for phospholipid synthesis. This chain is Glycerol-3-phosphate dehydrogenase [NAD(P)+], found in Gloeobacter violaceus (strain ATCC 29082 / PCC 7421).